Reading from the N-terminus, the 925-residue chain is GPI ethanolamine phosphate transferase 1 (925 aa).

Topologically, residues 1–6 are cytoplasmic; sequence MWNKHR. The chain crosses the membrane as a helical span at residues 7 to 27; sequence LAFILVGLLFHLFYLRSIFDI. Over 28–457 the chain is Lumenal; sequence YFVSPLVHGM…TTYNWRFIRS (430 aa). N-linked (GlcNAc...) asparagine glycosylation is found at Asn90, Asn138, Asn198, Asn286, Asn312, and Asn358. Residues 458–478 form a helical membrane-spanning segment; sequence IVTLGFIGWITYSFTIFLRLF. Residues 479-492 are Cytoplasmic-facing; the sequence is ILEKQYAMKTSPQN. The chain crosses the membrane as a helical span at residues 493–510; it reads LASFGALTAALNYVLYYQ. Topologically, residues 511–516 are lumenal; it reads RSPFNY. The chain crosses the membrane as a helical span at residues 517–537; it reads YMYLLFPLFFWSQILTNSTIL. Over 538–547 the chain is Cytoplasmic; that stretch reads HDGIREMFKG. A helical membrane pass occupies residues 548–568; the sequence is VSMLQRIGICALIVSIYEGIV. Residues 569-574 are Lumenal-facing; the sequence is YGYFDR. Residues 575 to 595 form a helical membrane-spanning segment; that stretch reads WIFTIIFNLLALYPFFCGIKD. The Cytoplasmic segment spans residues 596-599; that stretch reads AKTN. A helical membrane pass occupies residues 600 to 620; that stretch reads MFWGANSMALSIFTLFDAVKI. Residue Glu621 is a topological domain, lumenal. A helical membrane pass occupies residues 622–642; sequence SLTQINVSGLLLVASGLYALW. At 643–653 the chain is on the cytoplasmic side; it reads RVSKKINSHTK. Residues 654 to 674 form a helical membrane-spanning segment; that stretch reads IVILLQILLLAMMLAVTNKSV. Over 675 to 687 the chain is Lumenal; it reads TSLQQRAGLPTDA. The helical transmembrane segment at 688–708 threads the bilayer; that stretch reads KIAGWVILTLSLSLMPLLHYL. Residues 709 to 719 are Cytoplasmic-facing; sequence KPSNDYQVRVL. A helical transmembrane segment spans residues 720-740; sequence VIYLTFAPTFLILTISFESFF. The Lumenal segment spans residues 741–775; the sequence is YLLFTNYLMLWIEIESKIKAQNIAKNSQNWLQLLR. Residues 776–796 traverse the membrane as a helical segment; sequence ISIIGFFLLQFAFFGTGNVAS. Over 797-818 the chain is Cytoplasmic; sequence ISSFSLDSVYRLMPVFDPFPMG. Residues 819 to 839 traverse the membrane as a helical segment; sequence ALLILKIMIPYILLSTALGIM. Residues 840 to 848 are Lumenal-facing; it reads NLKLNIKDY. Residues 849–869 form a helical membrane-spanning segment; that stretch reads TVSSLILSTSDVLSLNFFYLL. Residues 870 to 885 lie on the Cytoplasmic side of the membrane; the sequence is RTEGSWLDIGVTISNY. The helical transmembrane segment at 886-906 threads the bilayer; the sequence is CLAILSSLFMIVLELFSHFLL. The Lumenal segment spans residues 907–925; that stretch reads KNVRDNGMDIAASKQQKRH.

It belongs to the PIGG/PIGN/PIGO family. PIGN subfamily.

It localises to the endoplasmic reticulum membrane. It functions in the pathway glycolipid biosynthesis; glycosylphosphatidylinositol-anchor biosynthesis. Its function is as follows. Ethanolamine phosphate transferase involved in glycosylphosphatidylinositol-anchor biosynthesis. Transfers ethanolamine phosphate to the first alpha-1,4-linked mannose of the glycosylphosphatidylinositol precursor of GPI-anchor. This chain is GPI ethanolamine phosphate transferase 1 (MCD4), found in Eremothecium gossypii (strain ATCC 10895 / CBS 109.51 / FGSC 9923 / NRRL Y-1056) (Yeast).